The following is a 191-amino-acid chain: Sec-independent protein translocase protein TatB (191 aa).

The chain crosses the membrane as a helical span at residues 1–21 (MFDIGFSELFLILVIGLLVLG). The segment covering 119 to 138 (ESTSQTLTEQLTPSEQVTEA) has biased composition (polar residues). Disordered regions lie at residues 119–139 (ESTS…TEAT) and 168–191 (DDDD…DKKA). A compositionally biased stretch (basic and acidic residues) spans 181-191 (PQTEEIQDKKA).

The protein belongs to the TatB family. The Tat system comprises two distinct complexes: a TatABC complex, containing multiple copies of TatA, TatB and TatC subunits, and a separate TatA complex, containing only TatA subunits. Substrates initially bind to the TatABC complex, which probably triggers association of the separate TatA complex to form the active translocon.

The protein resides in the cell inner membrane. Part of the twin-arginine translocation (Tat) system that transports large folded proteins containing a characteristic twin-arginine motif in their signal peptide across membranes. Together with TatC, TatB is part of a receptor directly interacting with Tat signal peptides. TatB may form an oligomeric binding site that transiently accommodates folded Tat precursor proteins before their translocation. This is Sec-independent protein translocase protein TatB from Pasteurella multocida (strain Pm70).